The sequence spans 417 residues: Glutamate-1-semialdehyde 2,1-aminomutase (417 aa).

Lys267 is subject to N6-(pyridoxal phosphate)lysine.

Belongs to the class-III pyridoxal-phosphate-dependent aminotransferase family. HemL subfamily. As to quaternary structure, homodimer. Pyridoxal 5'-phosphate is required as a cofactor.

Its subcellular location is the cytoplasm. It carries out the reaction (S)-4-amino-5-oxopentanoate = 5-aminolevulinate. Its pathway is porphyrin-containing compound metabolism; protoporphyrin-IX biosynthesis; 5-aminolevulinate from L-glutamyl-tRNA(Glu): step 2/2. The polypeptide is Glutamate-1-semialdehyde 2,1-aminomutase (Solibacter usitatus (strain Ellin6076)).